The chain runs to 252 residues: Adapter protein MecA (252 aa).

Belongs to the MecA family. In terms of assembly, homodimer.

In terms of biological role, enables the recognition and targeting of unfolded and aggregated proteins to the ClpC protease or to other proteins involved in proteolysis. In Streptococcus uberis (strain ATCC BAA-854 / 0140J), this protein is Adapter protein MecA.